Here is a 95-residue protein sequence, read N- to C-terminus: Co-chaperonin GroES (95 aa).

This sequence belongs to the GroES chaperonin family. In terms of assembly, heptamer of 7 subunits arranged in a ring. Interacts with the chaperonin GroEL.

Its subcellular location is the cytoplasm. Its function is as follows. Together with the chaperonin GroEL, plays an essential role in assisting protein folding. The GroEL-GroES system forms a nano-cage that allows encapsulation of the non-native substrate proteins and provides a physical environment optimized to promote and accelerate protein folding. GroES binds to the apical surface of the GroEL ring, thereby capping the opening of the GroEL channel. This is Co-chaperonin GroES from Chlorobium limicola (strain DSM 245 / NBRC 103803 / 6330).